Reading from the N-terminus, the 416-residue chain is Tyrosine--tRNA ligase (416 aa).

Tyrosine 40 provides a ligand contact to L-tyrosine. Residues 45 to 54 (ATAASLHVGH) carry the 'HIGH' region motif. Tyrosine 177 and glutamine 181 together coordinate L-tyrosine. A 'KMSKS' region motif is present at residues 237-241 (KMGKS). Position 240 (lysine 240) interacts with ATP. The S4 RNA-binding domain occupies 351–416 (LSVAHFLVAA…RKKHKLVRLS (66 aa)).

Belongs to the class-I aminoacyl-tRNA synthetase family. TyrS type 1 subfamily. Homodimer.

It localises to the cytoplasm. The catalysed reaction is tRNA(Tyr) + L-tyrosine + ATP = L-tyrosyl-tRNA(Tyr) + AMP + diphosphate + H(+). In terms of biological role, catalyzes the attachment of tyrosine to tRNA(Tyr) in a two-step reaction: tyrosine is first activated by ATP to form Tyr-AMP and then transferred to the acceptor end of tRNA(Tyr). This chain is Tyrosine--tRNA ligase, found in Cereibacter sphaeroides (strain KD131 / KCTC 12085) (Rhodobacter sphaeroides).